The chain runs to 2113 residues: Ninein (2113 aa).

2 EF-hand domains span residues 8-43 (QHEA…LCLE) and 42-77 (LEDV…ILSR). Ser-152 carries the post-translational modification Phosphoserine. 2 EF-hand domains span residues 182 to 217 (WIEE…YGLQ) and 219 to 252 (VDGA…TGKS). Residue 245–252 (GLFKTGKS) coordinates GTP. Ser-269 is modified (phosphoserine). A GTP-binding site is contributed by 300 to 304 (DGMGQ). In terms of domain architecture, EF-hand 5 spans 317-352 (EGIENSQEILKALDFSLDGNINLTELTLALENELLV). Positions 358-570 (HQAALASFKA…YQAQGRVLRL (213 aa)) form a coiled coil. 420–423 (RKLD) lines the GTP pocket. Positions 578–599 (EELDGHSGGIEPDQGPGSEECN) are disordered. Coiled coils occupy residues 620-926 (RDLC…ESQH), 958-1008 (EQLA…STEI), 1175-1323 (EDTR…MEKV), and 1425-1806 (AALL…IDKD). The segment at 798–1495 (EMETECNRRV…QDLQITCGEM (698 aa)) is important for interaction with CEP170. A phosphoserine mark is found at Ser-1540 and Ser-1826. Coiled-coil stretches lie at residues 1852 to 1910 (VQNT…KEQS) and 1971 to 2093 (REQF…IASL). Disordered regions lie at residues 1899–1922 (KREC…MGSL) and 1988–2008 (SQHL…PQGN). Basic and acidic residues predominate over residues 1988-1999 (SQHLQEELENRT).

Homooligomer. Interacts with GSK3B/GSK3-beta via its C-terminal domain. Interacts with C14ORF166, such interaction may prevent its phosphorylation by GSK3B. Interacts with AUNIP (via N-terminus). Identified in a complex with AUNIP and AURKA. Interacts with CCDC120. Interacts (via C-terminus) with CEP250. Interacts with CEP170. Interacts (via N-terminus) with the gamma-tubulin ring complex component TUBGCP3. Interacts with gamma-tubulin. Isoform 4 does not interact with CEP170 or CEP250. Phosphorylated by AURKA/Aurora kinase A and PKA kinases but not CK2 or AURKB/Aurora kinase B. Widely expressed. Highly expressed in spleen, bone marrow and skin. Weakly expressed in liver and small intestine. Expressed in brain.

The protein localises to the cytoplasm. Its subcellular location is the cytoskeleton. It localises to the microtubule organizing center. The protein resides in the centrosome. It is found in the centriole. Its function is as follows. Centrosomal protein required for the positioning and anchorage of the microtubule minus-end in epithelial cells. May also act as a centrosome maturation factor. May play a role in microtubule nucleation, by recruiting the gamma-tubulin ring complex to the centrosome. Overexpression does not perturb nucleation or elongation of microtubules but suppresses release of microtubules. Required for centriole organization and microtubule anchoring at the mother centriole. The protein is Ninein of Mus musculus (Mouse).